Consider the following 439-residue polypeptide: 3-phosphoshikimate 1-carboxyvinyltransferase (439 aa).

Positions 29 and 34 each coordinate 3-phosphoshikimate. Residue Lys-29 coordinates phosphoenolpyruvate. Residues Gly-99 and Arg-128 each coordinate phosphoenolpyruvate. Residues Ser-171, Ser-172, Gln-173, Ser-199, Asp-316, and Lys-343 each coordinate 3-phosphoshikimate. Gln-173 serves as a coordination point for phosphoenolpyruvate. Asp-316 acts as the Proton acceptor in catalysis. 3 residues coordinate phosphoenolpyruvate: Arg-347, Arg-390, and Lys-416.

This sequence belongs to the EPSP synthase family. Monomer.

The protein localises to the cytoplasm. The enzyme catalyses 3-phosphoshikimate + phosphoenolpyruvate = 5-O-(1-carboxyvinyl)-3-phosphoshikimate + phosphate. It participates in metabolic intermediate biosynthesis; chorismate biosynthesis; chorismate from D-erythrose 4-phosphate and phosphoenolpyruvate: step 6/7. Functionally, catalyzes the transfer of the enolpyruvyl moiety of phosphoenolpyruvate (PEP) to the 5-hydroxyl of shikimate-3-phosphate (S3P) to produce enolpyruvyl shikimate-3-phosphate and inorganic phosphate. The sequence is that of 3-phosphoshikimate 1-carboxyvinyltransferase from Deinococcus radiodurans (strain ATCC 13939 / DSM 20539 / JCM 16871 / CCUG 27074 / LMG 4051 / NBRC 15346 / NCIMB 9279 / VKM B-1422 / R1).